We begin with the raw amino-acid sequence, 152 residues long: Endoribonuclease YbeY (152 aa).

His-113, His-117, and His-123 together coordinate Zn(2+).

The protein belongs to the endoribonuclease YbeY family. Requires Zn(2+) as cofactor.

Its subcellular location is the cytoplasm. Single strand-specific metallo-endoribonuclease involved in late-stage 70S ribosome quality control and in maturation of the 3' terminus of the 16S rRNA. In Delftia acidovorans (strain DSM 14801 / SPH-1), this protein is Endoribonuclease YbeY.